The following is a 529-amino-acid chain: Beta-glucosidase 11 (529 aa).

Residues 1–25 (MAVAGAMVMSGALLLLHLLAFTCVA) form the signal peptide. Residues Gln54, His157, and 202–203 (NE) each bind a beta-D-glucoside. Catalysis depends on Glu203, which acts as the Proton donor. An intrachain disulfide couples Cys222 to Cys230. Residue Tyr346 coordinates a beta-D-glucoside. Asn361 is a glycosylation site (N-linked (GlcNAc...) asparagine). An a beta-D-glucoside-binding site is contributed by Glu417. Glu417 (nucleophile) is an active-site residue. Asn425 is a glycosylation site (N-linked (GlcNAc...) asparagine). Residues Trp466, 473–474 (EW), and Phe482 contribute to the a beta-D-glucoside site.

The protein belongs to the glycosyl hydrolase 1 family.

It catalyses the reaction Hydrolysis of terminal, non-reducing beta-D-glucosyl residues with release of beta-D-glucose.. This Oryza sativa subsp. japonica (Rice) protein is Beta-glucosidase 11 (BGLU11).